The following is a 209-amino-acid chain: MKLNPDSLSRKENYRLLIGAVLPRPIAFVTTKSKAGVVNAAPFSFYNVLTAEPPLIGISVGRKPDGTPKDTARNGQEIGEFVVHVVDEQNVEAVNVSSIPLPPEESEVEYAGLTEVPSEVVSVPSLAESRIRLECKVENVIPIGGKGGEPAADFLIGRVVHYEVADDLFQDGGIDTEALRPVSRLAGNEYGKYGETFSLDRPTISQNRE.

The protein belongs to the flavoredoxin family. Requires FMN as cofactor.

This is an uncharacterized protein from Halalkalibacterium halodurans (strain ATCC BAA-125 / DSM 18197 / FERM 7344 / JCM 9153 / C-125) (Bacillus halodurans).